The chain runs to 399 residues: Argininosuccinate synthase (399 aa).

12 to 20 (AFSGGLDTS) provides a ligand contact to ATP. L-citrulline is bound at residue Y90. Residue G120 participates in ATP binding. Residues T122, N126, and D127 each coordinate L-aspartate. Position 126 (N126) interacts with L-citrulline. L-citrulline contacts are provided by R130, S175, E260, and Y272.

Belongs to the argininosuccinate synthase family. Type 1 subfamily. Homotetramer.

The protein resides in the cytoplasm. The enzyme catalyses L-citrulline + L-aspartate + ATP = 2-(N(omega)-L-arginino)succinate + AMP + diphosphate + H(+). Its pathway is amino-acid biosynthesis; L-arginine biosynthesis; L-arginine from L-ornithine and carbamoyl phosphate: step 2/3. In Methanothermobacter thermautotrophicus (strain ATCC 29096 / DSM 1053 / JCM 10044 / NBRC 100330 / Delta H) (Methanobacterium thermoautotrophicum), this protein is Argininosuccinate synthase.